The primary structure comprises 102 residues: NADH-quinone oxidoreductase subunit K (102 aa).

Transmembrane regions (helical) follow at residues 6 to 26, 30 to 50, and 65 to 85; these read MEHG…GLLI, LLFI…AFVV, and ILVI…LLLL.

Belongs to the complex I subunit 4L family. In terms of assembly, NDH-1 is composed of 14 different subunits. Subunits NuoA, H, J, K, L, M, N constitute the membrane sector of the complex.

It localises to the cell inner membrane. It catalyses the reaction a quinone + NADH + 5 H(+)(in) = a quinol + NAD(+) + 4 H(+)(out). In terms of biological role, NDH-1 shuttles electrons from NADH, via FMN and iron-sulfur (Fe-S) centers, to quinones in the respiratory chain. The immediate electron acceptor for the enzyme in this species is believed to be ubiquinone. Couples the redox reaction to proton translocation (for every two electrons transferred, four hydrogen ions are translocated across the cytoplasmic membrane), and thus conserves the redox energy in a proton gradient. The sequence is that of NADH-quinone oxidoreductase subunit K from Aeromonas hydrophila subsp. hydrophila (strain ATCC 7966 / DSM 30187 / BCRC 13018 / CCUG 14551 / JCM 1027 / KCTC 2358 / NCIMB 9240 / NCTC 8049).